A 749-amino-acid chain; its full sequence is Protein lin-54 homolog (749 aa).

A Glycyl lysine isopeptide (Lys-Gly) (interchain with G-Cter in SUMO2) cross-link involves residue lysine 139. Residues lysine 244 and lysine 249 each carry the N6-acetyllysine modification. 4 positions are modified to phosphoserine: serine 264, serine 282, serine 310, and serine 314. Residue lysine 357 forms a Glycyl lysine isopeptide (Lys-Gly) (interchain with G-Cter in SUMO2) linkage. Positions 369–388 are disordered; the sequence is ASSSTQPVSQNPSTNTQPLQ. Positions 521 to 634 constitute a CRC domain; the sequence is PRKPCNCTKS…KCIGCKNFEE (114 aa). The tract at residues 523-536 is DNA-binding; the sequence is KPCNCTKSLCLKLY. Positions 525, 527, 532, 537, 539, 546, 549, 551, and 554 each coordinate Zn(2+). The interval 583 to 596 is linker; sequence IGKGKEGESDRRHS. The Zn(2+) site is built by cysteine 599, cysteine 601, cysteine 606, cysteine 611, cysteine 613, cysteine 620, cysteine 624, cysteine 626, and cysteine 629. The DNA-binding stretch occupies residues 599 to 612; that stretch reads CNCKRSGCLKNYCE. Serine 635 carries the post-translational modification Phosphoserine. Residues lysine 639, lysine 659, and lysine 661 each participate in a glycyl lysine isopeptide (Lys-Gly) (interchain with G-Cter in SUMO2) cross-link.

It belongs to the lin-54 family. As to quaternary structure, component of the DREAM complex (also named LINC complex) at least composed of E2F4, E2F5, LIN9, LIN37, LIN52, LIN54, MYBL1, MYBL2, RBL1, RBL2, RBBP4, TFDP1 and TFDP2. The complex exists in quiescent cells where it represses cell cycle-dependent genes. It dissociates in S phase when LIN9, LIN37, LIN52 and LIN54 form a subcomplex that binds to MYBL2.

It is found in the nucleus. Its function is as follows. Component of the DREAM complex, a multiprotein complex that can both act as a transcription activator or repressor depending on the context. In G0 phase, the complex binds to more than 800 promoters and is required for repression of E2F target genes. In S phase, the complex selectively binds to the promoters of G2/M genes whose products are required for mitosis and participates in their cell cycle dependent activation. In the complex, acts as a DNA-binding protein that binds the promoter of CDK1 in a sequence-specific manner. Specifically recognizes the consensus motif 5'-TTYRAA-3' in target DNA. The polypeptide is Protein lin-54 homolog (LIN54) (Homo sapiens (Human)).